The chain runs to 159 residues: Small ribosomal subunit protein uS9 (159 aa).

Belongs to the universal ribosomal protein uS9 family.

The polypeptide is Small ribosomal subunit protein uS9 (Beijerinckia indica subsp. indica (strain ATCC 9039 / DSM 1715 / NCIMB 8712)).